A 191-amino-acid polypeptide reads, in one-letter code: Fe/S biogenesis protein NfuA (191 aa).

[4Fe-4S] cluster contacts are provided by cysteine 149 and cysteine 152.

Belongs to the NfuA family. As to quaternary structure, homodimer. It depends on [4Fe-4S] cluster as a cofactor.

Involved in iron-sulfur cluster biogenesis. Binds a 4Fe-4S cluster, can transfer this cluster to apoproteins, and thereby intervenes in the maturation of Fe/S proteins. Could also act as a scaffold/chaperone for damaged Fe/S proteins. The chain is Fe/S biogenesis protein NfuA from Salmonella typhi.